The following is a 214-amino-acid chain: Large ribosomal subunit protein uL16 (214 aa).

It belongs to the universal ribosomal protein uL16 family. In terms of assembly, component of the large ribosomal subunit. Mature ribosomes consist of a small (40S) and a large (60S) subunit. The 40S subunit contains about 33 different proteins and 1 molecule of RNA (18S). The 60S subunit contains about 49 different proteins and 3 molecules of RNA (28S, 5.8S and 5S).

In Caenorhabditis elegans, this protein is Large ribosomal subunit protein uL16 (rpl-10L).